A 968-amino-acid polypeptide reads, in one-letter code: RNA polymerase-associated protein RapA (968 aa).

In terms of domain architecture, Helicase ATP-binding spans 164 to 334 (DVGRRHAPRV…FARLRLLDPN (171 aa)). An ATP-binding site is contributed by 177-184 (DEVGLGKT). Positions 280–283 (DEAH) match the DEAH box motif. The region spanning 490–685 (RVEWLMGYLT…ALKAQLEQGR (196 aa)) is the Helicase C-terminal domain.

It belongs to the SNF2/RAD54 helicase family. RapA subfamily. In terms of assembly, interacts with the RNAP. Has a higher affinity for the core RNAP than for the holoenzyme. Its ATPase activity is stimulated by binding to RNAP.

Transcription regulator that activates transcription by stimulating RNA polymerase (RNAP) recycling in case of stress conditions such as supercoiled DNA or high salt concentrations. Probably acts by releasing the RNAP, when it is trapped or immobilized on tightly supercoiled DNA. Does not activate transcription on linear DNA. Probably not involved in DNA repair. In Salmonella paratyphi C (strain RKS4594), this protein is RNA polymerase-associated protein RapA.